A 136-amino-acid polypeptide reads, in one-letter code: Large-conductance mechanosensitive channel (136 aa).

Helical transmembrane passes span 9-29 and 79-99; these read AFAS…GAAF and IQTV…LKAI.

The protein belongs to the MscL family. As to quaternary structure, homopentamer.

The protein resides in the cell inner membrane. Functionally, channel that opens in response to stretch forces in the membrane lipid bilayer. May participate in the regulation of osmotic pressure changes within the cell. The sequence is that of Large-conductance mechanosensitive channel from Shewanella sp. (strain MR-4).